A 359-amino-acid chain; its full sequence is Guanine nucleotide-binding protein subunit alpha-11 (359 aa).

2 S-palmitoyl cysteine lipidation sites follow: C9 and C10. A G-alpha domain is found at 38 to 359 (RELKLLLLGT…QHNLKEYNLV (322 aa)). A G1 motif region spans residues 41–54 (KLLLLGTGESGKST). GTP contacts are provided by residues 46–53 (GTGESGKS) and 180–183 (LRVR). Mg(2+) is bound at residue S53. The G2 motif stretch occupies residues 178-186 (DVLRVRVPT). Position 186 (T186) interacts with Mg(2+). The tract at residues 201–210 (FRMVDVGGQR) is G3 motif. A G4 motif region spans residues 270–277 (ILFLNKKD). GTP is bound by residues 274–277 (NKKD) and A331. The tract at residues 329 to 334 (TCATDT) is G5 motif.

The protein belongs to the G-alpha family. G(q) subfamily. As to quaternary structure, g proteins are composed of 3 units; alpha, beta and gamma. The alpha chain contains the guanine nucleotide binding site.

The protein localises to the cell membrane. It localises to the cytoplasm. It carries out the reaction GTP + H2O = GDP + phosphate + H(+). Functionally, guanine nucleotide-binding proteins (G proteins) function as transducers downstream of G protein-coupled receptors (GPCRs) in numerous signaling cascades. The alpha chain contains the guanine nucleotide binding site and alternates between an active, GTP-bound state and an inactive, GDP-bound state. Signaling by an activated GPCR promotes GDP release and GTP binding. The alpha subunit has a low GTPase activity that converts bound GTP to GDP, thereby terminating the signal. Both GDP release and GTP hydrolysis are modulated by numerous regulatory proteins. Signaling is mediated via phospholipase C-beta-dependent inositol lipid hydrolysis for signal propagation: activates phospholipase C-beta: following GPCR activation, GNA11 activates PLC-beta (PLCB1, PLCB2, PLCB3 or PLCB4), leading to production of diacylglycerol (DAG) and inositol 1,4,5-trisphosphate (IP3). The polypeptide is Guanine nucleotide-binding protein subunit alpha-11 (gna11) (Xenopus laevis (African clawed frog)).